The sequence spans 328 residues: Cytochrome c biogenesis protein CcsA (328 aa).

Transmembrane regions (helical) follow at residues 13–33, 46–66, 73–93, 101–121, 146–166, 234–254, 263–283, and 295–315; these read ISFSVVSIVLTIYFFTLLVNL, GIVITFFGITGLLFTRWIYSG, LYESLIFLSWAFSIIHMVSYF, LNAITAPSAIFIQGFATSGLL, MILGYGALLCGSLLSIALLVI, IISLGFIFLTVGILSGAVWAN, WDPKETWAFITWTIFAIYLHI, and AIVASIGFLLIWICYFGVNLL.

Belongs to the CcmF/CycK/Ccl1/NrfE/CcsA family. May interact with Ccs1.

The protein localises to the plastid. The protein resides in the chloroplast thylakoid membrane. Required during biogenesis of c-type cytochromes (cytochrome c6 and cytochrome f) at the step of heme attachment. This chain is Cytochrome c biogenesis protein CcsA, found in Barbarea verna (Land cress).